A 903-amino-acid polypeptide reads, in one-letter code: KAT8 regulatory NSL complex subunit 1-like protein (903 aa).

3 disordered regions span residues 319 to 343, 419 to 441, and 652 to 676; these read DSDATGSSSDEDWDEKARQNSDECN, MPKSPQGTNPSPTNDLDMSPSSP, and TECTSSYSPDPQTPAHSWERRHRSE. Composition is skewed to polar residues over residues 423-441 and 652-661; these read PQGTNPSPTNDLDMSPSSP and TECTSSYSPD. One can recognise a PEHE domain in the interval 748–862; it reads EIITPSWKEV…ESPKGKTIHW (115 aa).

This Xenopus tropicalis (Western clawed frog) protein is KAT8 regulatory NSL complex subunit 1-like protein (kansl1l).